The sequence spans 361 residues: Phospho-N-acetylmuramoyl-pentapeptide-transferase (361 aa).

10 helical membrane passes run 25-45 (RAVL…PAVI), 73-93 (TMGG…WADL), 97-117 (YVWL…VDDW), 134-154 (YFWQ…TASL), 168-188 (ATFG…IVGA), 200-220 (GLAI…AYVA), 237-257 (AGEL…FLWF), 264-284 (VFMG…VAVV), 289-309 (IILF…MIQV), and 338-358 (QVVV…LSSL).

The protein belongs to the glycosyltransferase 4 family. MraY subfamily. Mg(2+) serves as cofactor.

It is found in the cell inner membrane. It catalyses the reaction UDP-N-acetyl-alpha-D-muramoyl-L-alanyl-gamma-D-glutamyl-meso-2,6-diaminopimeloyl-D-alanyl-D-alanine + di-trans,octa-cis-undecaprenyl phosphate = di-trans,octa-cis-undecaprenyl diphospho-N-acetyl-alpha-D-muramoyl-L-alanyl-D-glutamyl-meso-2,6-diaminopimeloyl-D-alanyl-D-alanine + UMP. It participates in cell wall biogenesis; peptidoglycan biosynthesis. Catalyzes the initial step of the lipid cycle reactions in the biosynthesis of the cell wall peptidoglycan: transfers peptidoglycan precursor phospho-MurNAc-pentapeptide from UDP-MurNAc-pentapeptide onto the lipid carrier undecaprenyl phosphate, yielding undecaprenyl-pyrophosphoryl-MurNAc-pentapeptide, known as lipid I. The sequence is that of Phospho-N-acetylmuramoyl-pentapeptide-transferase from Thiobacillus denitrificans (strain ATCC 25259 / T1).